The sequence spans 393 residues: Aspartate aminotransferase (393 aa).

3 residues coordinate L-aspartate: Gly38, Trp124, and Asn174. Lys237 carries the post-translational modification N6-(pyridoxal phosphate)lysine.

This sequence belongs to the class-I pyridoxal-phosphate-dependent aminotransferase family. As to quaternary structure, homodimer. The cofactor is pyridoxal 5'-phosphate.

It localises to the cytoplasm. It carries out the reaction L-aspartate + 2-oxoglutarate = oxaloacetate + L-glutamate. The polypeptide is Aspartate aminotransferase (aspC) (Geobacillus stearothermophilus (Bacillus stearothermophilus)).